The following is a 279-amino-acid chain: Tryptophan 2,3-dioxygenase (279 aa).

Residues 48–52, Tyr110, and Arg114 contribute to the substrate site; that span reads FIVIH. His237 lines the heme pocket. Residue Thr251 participates in substrate binding.

The protein belongs to the tryptophan 2,3-dioxygenase family. Homotetramer. The cofactor is heme.

The catalysed reaction is L-tryptophan + O2 = N-formyl-L-kynurenine. Its pathway is amino-acid degradation; L-tryptophan degradation via kynurenine pathway; L-kynurenine from L-tryptophan: step 1/2. Heme-dependent dioxygenase that catalyzes the oxidative cleavage of the L-tryptophan (L-Trp) pyrrole ring and converts L-tryptophan to N-formyl-L-kynurenine. Catalyzes the oxidative cleavage of the indole moiety. The sequence is that of Tryptophan 2,3-dioxygenase from Bacillus cereus (strain ZK / E33L).